Here is a 568-residue protein sequence, read N- to C-terminus: uncharacterized protein (568 aa).

Residues 334-346 (DDNEEKNNDRPKI) show a composition bias toward basic and acidic residues. 2 disordered regions span residues 334–382 (DDNE…NDQN) and 436–479 (QVEE…SCKN). Low complexity predominate over residues 458-477 (KIASSASKNDNSNNKNSKSC).

The protein to yeast YJL043w.

This is an uncharacterized protein from Saccharomyces cerevisiae (strain ATCC 204508 / S288c) (Baker's yeast).